Here is an 87-residue protein sequence, read N- to C-terminus: Small ribosomal subunit protein bS20 (87 aa).

Residues 1-27 (MANIKSAKKRALQSERRRQHNASRRSM) are compositionally biased toward basic residues. The tract at residues 1–31 (MANIKSAKKRALQSERRRQHNASRRSMTRTS) is disordered.

It belongs to the bacterial ribosomal protein bS20 family.

Its function is as follows. Binds directly to 16S ribosomal RNA. The protein is Small ribosomal subunit protein bS20 of Pseudoalteromonas atlantica (strain T6c / ATCC BAA-1087).